Here is a 251-residue protein sequence, read N- to C-terminus: Appressoria-specific virulence factor GAS1 (251 aa).

The signal sequence occupies residues M1–G21. The segment at V40 to Q76 is disordered. Residues Q54 to D66 are compositionally biased toward polar residues.

It localises to the cytoplasm. Its function is as follows. Appressoria-specific virulence factor required for appressorial penetration in host and lesion development. This chain is Appressoria-specific virulence factor GAS1, found in Pyricularia oryzae (strain 70-15 / ATCC MYA-4617 / FGSC 8958) (Rice blast fungus).